Here is a 913-residue protein sequence, read N- to C-terminus: DNA mismatch repair protein MutS (913 aa).

Positions Asn-18 to Ser-50 are disordered. Over residues Asn-19 to Lys-42 the composition is skewed to basic and acidic residues. An ATP-binding site is contributed by Gly-720 to Ser-727.

It belongs to the DNA mismatch repair MutS family.

This protein is involved in the repair of mismatches in DNA. It is possible that it carries out the mismatch recognition step. This protein has a weak ATPase activity. This Prochlorococcus marinus (strain MIT 9301) protein is DNA mismatch repair protein MutS.